The sequence spans 172 residues: Protein GrpE (172 aa).

The disordered stretch occupies residues 1 to 24 (MNQDHPEFDSEDLAQNPPETDPLK).

Belongs to the GrpE family. Homodimer.

It is found in the cytoplasm. In terms of biological role, participates actively in the response to hyperosmotic and heat shock by preventing the aggregation of stress-denatured proteins, in association with DnaK and GrpE. It is the nucleotide exchange factor for DnaK and may function as a thermosensor. Unfolded proteins bind initially to DnaJ; upon interaction with the DnaJ-bound protein, DnaK hydrolyzes its bound ATP, resulting in the formation of a stable complex. GrpE releases ADP from DnaK; ATP binding to DnaK triggers the release of the substrate protein, thus completing the reaction cycle. Several rounds of ATP-dependent interactions between DnaJ, DnaK and GrpE are required for fully efficient folding. In Xanthomonas oryzae pv. oryzae (strain PXO99A), this protein is Protein GrpE.